Consider the following 201-residue polypeptide: MAEKFIKHTGLVVPLDAANVDTDAIIPKQFLQKVTRTGFGAHLFNDWRFLDEKGQQPNPDFVLNFPQYQGASILLARENFGCGSSREHAPWALTDYGFKVVIAPSFADIFYGNSFNNQLLPVKLSDAEVDELFALVKANPGIHFDVDLEAQEVKAGEKTYRFTIDAFRRHCMMNGLDSIGLTLQHDDAIAAYEAKQPAFMR.

The protein belongs to the LeuD family. LeuD type 1 subfamily. Heterodimer of LeuC and LeuD.

The catalysed reaction is (2R,3S)-3-isopropylmalate = (2S)-2-isopropylmalate. The protein operates within amino-acid biosynthesis; L-leucine biosynthesis; L-leucine from 3-methyl-2-oxobutanoate: step 2/4. Catalyzes the isomerization between 2-isopropylmalate and 3-isopropylmalate, via the formation of 2-isopropylmaleate. The protein is 3-isopropylmalate dehydratase small subunit of Shigella dysenteriae serotype 1 (strain Sd197).